A 382-amino-acid chain; its full sequence is Mannitol-1-phosphate 5-dehydrogenase (382 aa).

3–14 (ALHFGAGNIGRG) contributes to the NAD(+) binding site. The residue at position 269 (Lys-269) is an N6-acetyllysine.

This sequence belongs to the mannitol dehydrogenase family.

The enzyme catalyses D-mannitol 1-phosphate + NAD(+) = beta-D-fructose 6-phosphate + NADH + H(+). This is Mannitol-1-phosphate 5-dehydrogenase from Escherichia coli O139:H28 (strain E24377A / ETEC).